The chain runs to 213 residues: Serine acetyltransferase (213 aa).

It belongs to the transferase hexapeptide repeat family.

The protein localises to the cytoplasm. The catalysed reaction is L-serine + acetyl-CoA = O-acetyl-L-serine + CoA. The protein operates within amino-acid biosynthesis; L-cysteine biosynthesis; L-cysteine from L-serine: step 1/2. The sequence is that of Serine acetyltransferase (cysE) from Staphylococcus aureus (strain COL).